The sequence spans 192 residues: Probable nicotinate-nucleotide adenylyltransferase (192 aa).

The protein belongs to the NadD family.

The catalysed reaction is nicotinate beta-D-ribonucleotide + ATP + H(+) = deamido-NAD(+) + diphosphate. The protein operates within cofactor biosynthesis; NAD(+) biosynthesis; deamido-NAD(+) from nicotinate D-ribonucleotide: step 1/1. In terms of biological role, catalyzes the reversible adenylation of nicotinate mononucleotide (NaMN) to nicotinic acid adenine dinucleotide (NaAD). The chain is Probable nicotinate-nucleotide adenylyltransferase from Staphylococcus haemolyticus (strain JCSC1435).